Reading from the N-terminus, the 243-residue chain is DNA repair protein RecO (243 aa).

The protein belongs to the RecO family.

Its function is as follows. Involved in DNA repair and RecF pathway recombination. In Vibrio vulnificus (strain CMCP6), this protein is DNA repair protein RecO.